A 1444-amino-acid chain; its full sequence is DNA polymerase III PolC-type (1444 aa).

Residues 421–577 enclose the Exonuclease domain; it reads YVVFDVETTG…ADAEATGYLL (157 aa).

Belongs to the DNA polymerase type-C family. PolC subfamily.

The protein localises to the cytoplasm. It catalyses the reaction DNA(n) + a 2'-deoxyribonucleoside 5'-triphosphate = DNA(n+1) + diphosphate. Functionally, required for replicative DNA synthesis. This DNA polymerase also exhibits 3' to 5' exonuclease activity. In Lacticaseibacillus paracasei (strain ATCC 334 / BCRC 17002 / CCUG 31169 / CIP 107868 / KCTC 3260 / NRRL B-441) (Lactobacillus paracasei), this protein is DNA polymerase III PolC-type.